The chain runs to 331 residues: 6-phosphogluconolactonase (331 aa).

This sequence belongs to the cycloisomerase 2 family.

The catalysed reaction is 6-phospho-D-glucono-1,5-lactone + H2O = 6-phospho-D-gluconate + H(+). It functions in the pathway carbohydrate degradation; pentose phosphate pathway; D-ribulose 5-phosphate from D-glucose 6-phosphate (oxidative stage): step 2/3. Functionally, catalyzes the hydrolysis of 6-phosphogluconolactone to 6-phosphogluconate. The polypeptide is 6-phosphogluconolactonase (Sodalis glossinidius (strain morsitans)).